The chain runs to 719 residues: Lanosterol synthase (719 aa).

The stretch at 118–160 (RIEVIRYLVNHANPEDGGWGIHIEGKSTVFGTALNYVVLRILG) is one PFTB 1 repeat. The active-site Proton donor is the aspartate 451. PFTB repeat units follow at residues 478–523 (LKDS…MIEH), 555–595 (VKNA…SCVK), and 604–645 (SRRA…VVQT).

It belongs to the terpene cyclase/mutase family.

The catalysed reaction is (S)-2,3-epoxysqualene = lanosterol. It functions in the pathway terpene metabolism; lanosterol biosynthesis; lanosterol from farnesyl diphosphate: step 3/3. In terms of biological role, catalyzes the cyclization of (S)-2,3 oxidosqualene to lanosterol, a reaction that forms the sterol nucleus. The polypeptide is Lanosterol synthase (ERG7) (Pneumocystis carinii).